A 580-amino-acid polypeptide reads, in one-letter code: Threonine--tRNA ligase (580 aa).

Residues 179 to 476 form a catalytic region; it reads DHRKIGKDLN…LLEQTKGILP (298 aa). Zn(2+) is bound by residues Cys-272, His-323, and His-453.

It belongs to the class-II aminoacyl-tRNA synthetase family. As to quaternary structure, homodimer. Zn(2+) serves as cofactor.

It is found in the cytoplasm. It catalyses the reaction tRNA(Thr) + L-threonine + ATP = L-threonyl-tRNA(Thr) + AMP + diphosphate + H(+). Its function is as follows. Catalyzes the attachment of threonine to tRNA(Thr) in a two-step reaction: L-threonine is first activated by ATP to form Thr-AMP and then transferred to the acceptor end of tRNA(Thr). Also edits incorrectly charged L-seryl-tRNA(Thr). The protein is Threonine--tRNA ligase of Ureaplasma parvum serovar 3 (strain ATCC 27815 / 27 / NCTC 11736).